Consider the following 533-residue polypeptide: Calcium-dependent protein kinase 8 (533 aa).

Residues 1 to 21 are disordered; sequence MGNCCASPGSETGSKKGKPKI. A lipid anchor (N-myristoyl glycine) is attached at Gly2. In terms of domain architecture, Protein kinase spans 57–315; that stretch reads YDLGREVGRG…AAQVLEHSWI (259 aa). Residues 63–71 and Lys86 contribute to the ATP site; that span reads VGRGEFGIT. Residue Asp181 is the Proton acceptor of the active site. Ser221 carries the post-translational modification Phosphoserine. An autoinhibitory domain region spans residues 321–351; sequence APNVSLGETVKARLKQFSVMNKLKKRALRVI. 4 EF-hand domains span residues 358-394, 395-430, 431-466, and 467-502; these read EEVAGIKEAFEMMDSKKTGKINLEELKFGLHKLGQQQ, IPDTDLQILMEAADVDGDGTLNYGEFVAVSVHLKKM, ANDEHLHKAFSFFDQNQSDYIEIEELREALNDEVDT, and NSEEVVAAIMQDVDTDKDGRISYEEFAAMMKAGTDW. Residues Asp371, Thr375, Lys377, Glu382, Asp408, Asp410, Asp412, Thr414, Glu419, Asp444, Asn446, Ser448, Tyr450, Glu455, Asp480, Asp482, Asp484, and Arg486 each contribute to the Ca(2+) site. The residue at position 488 (Ser488) is a Phosphoserine. A Ca(2+)-binding site is contributed by Glu491. A Phosphoserine modification is found at Ser526.

It belongs to the protein kinase superfamily. Ser/Thr protein kinase family. CDPK subfamily.

It is found in the cell membrane. It carries out the reaction L-seryl-[protein] + ATP = O-phospho-L-seryl-[protein] + ADP + H(+). The enzyme catalyses L-threonyl-[protein] + ATP = O-phospho-L-threonyl-[protein] + ADP + H(+). Its activity is regulated as follows. Activated by calcium. Autophosphorylation may play an important role in the regulation of the kinase activity. Functionally, may play a role in signal transduction pathways that involve calcium as a second messenger. The protein is Calcium-dependent protein kinase 8 (CPK8) of Arabidopsis thaliana (Mouse-ear cress).